The chain runs to 382 residues: Na(+)/H(+) antiporter NhaA 2 (382 aa).

11 helical membrane passes run 7–27 (MALSETFPGILLIFFTFLALL), 58–78 (LDLWINDGLIAIFFLCIGLEL), 94–114 (SLPIFGALGGMITPALIFAAI), 124–144 (GWAIPTATDIAFAVGILMLLG), 153–173 (LFLLSLAIFDDLGAIVIIALF), 178–198 (LSALAIIICLFCIFALLLLNY), 199–219 (YHITHLSLYVLVGVVLWIAML), 255–275 (NPWVVYFILPLFAFANAGIDI), 291–311 (IILGLFLGKQLGVFIFCFIAI), 327–347 (FYGICILTGIGFTMSLFIDGL), and 361–381 (LAILIASFLSAIVGFIYLKIV).

This sequence belongs to the NhaA Na(+)/H(+) (TC 2.A.33) antiporter family.

It is found in the cell inner membrane. It carries out the reaction Na(+)(in) + 2 H(+)(out) = Na(+)(out) + 2 H(+)(in). In terms of biological role, na(+)/H(+) antiporter that extrudes sodium in exchange for external protons. The sequence is that of Na(+)/H(+) antiporter NhaA 2 from Campylobacter jejuni subsp. doylei (strain ATCC BAA-1458 / RM4099 / 269.97).